We begin with the raw amino-acid sequence, 637 residues long: Chaperone protein DnaK (637 aa).

At threonine 198 the chain carries Phosphothreonine; by autocatalysis. Residues 601 to 615 show a composition bias toward low complexity; the sequence is AQQKAQAEQAGADAG. Residues 601–637 are disordered; sequence AQQKAQAEQAGADAGEQPKQDDDVVDAEFEEVKEDKK. Acidic residues predominate over residues 623 to 637; the sequence is DVVDAEFEEVKEDKK.

The protein belongs to the heat shock protein 70 family.

Acts as a chaperone. The polypeptide is Chaperone protein DnaK (Vibrio atlanticus (strain LGP32) (Vibrio splendidus (strain Mel32))).